Here is a 177-residue protein sequence, read N- to C-terminus: Peptidoglycan-associated lipoprotein (177 aa).

Positions 1–32 (MSRTNISALSPMQKLARNPAVIAMTLALALAG) are cleaved as a signal peptide. A lipid anchor (N-palmitoyl cysteine) is attached at Cys33. A lipid anchor (S-diacylglycerol cysteine) is attached at Cys33. One can recognise an OmpA-like domain in the interval 59–176 (QQDFTVNVGD…RAVTVLGGAG (118 aa)).

The protein belongs to the Pal lipoprotein family. In terms of assembly, the Tol-Pal system is composed of five core proteins: the inner membrane proteins TolA, TolQ and TolR, the periplasmic protein TolB and the outer membrane protein Pal. They form a network linking the inner and outer membranes and the peptidoglycan layer.

The protein resides in the cell outer membrane. Part of the Tol-Pal system, which plays a role in outer membrane invagination during cell division and is important for maintaining outer membrane integrity. This Agrobacterium fabrum (strain C58 / ATCC 33970) (Agrobacterium tumefaciens (strain C58)) protein is Peptidoglycan-associated lipoprotein.